Reading from the N-terminus, the 107-residue chain is MESKRVDVLVGLMLIMAIFGVHSVTAHLPPGICIDHCMKECKLSGIGVVACIKYCPVHCLPPDSSSKEHFCNLGCMLDKCAKFNDDEKKMSDCVFDCRKFHCKINTD.

A signal peptide spans 1 to 23 (MESKRVDVLVGLMLIMAIFGVHS).

In terms of tissue distribution, stamen.

The sequence is that of Protein TAP1 (TAP1) from Antirrhinum majus (Garden snapdragon).